A 711-amino-acid polypeptide reads, in one-letter code: Polyribonucleotide nucleotidyltransferase (711 aa).

Residues 77–80 are FFRR loop; important for RNA binding; sequence FFRR. An interaction with RNase E region spans residues 327-331; the sequence is LDVRT. Mg(2+) is bound by residues D486 and D492. Positions 553-612 constitute a KH domain; the sequence is PRIHTIKINPDKIKDVIGKGGSVIRALTEETGTTIEIEDDGTVKIAATDGEKAKHAIRRI. Positions 622 to 690 constitute an S1 motif domain; that stretch reads GRVYTGKVTR…RQGRIRLSIK (69 aa). The tract at residues 689 to 711 is disordered; sequence IKEATEQSQPAAAPEAPAAEQGE. Over residues 694 to 711 the composition is skewed to low complexity; that stretch reads EQSQPAAAPEAPAAEQGE.

This sequence belongs to the polyribonucleotide nucleotidyltransferase family. In terms of assembly, component of the RNA degradosome, which is a multiprotein complex involved in RNA processing and mRNA degradation. Interacts with RNase E (rne). Homotrimer. The homotrimer forms a ring-like structure with a central channel, where RNA molecules can bind. RNA molecules bind between neighboring subunits. Might interact with YicC. The cofactor is Mg(2+). It depends on Mn(2+) as a cofactor.

The protein localises to the cytoplasm. It carries out the reaction RNA(n+1) + phosphate = RNA(n) + a ribonucleoside 5'-diphosphate. Its function is as follows. Involved in mRNA degradation. Catalyzes the phosphorolysis of single-stranded polyribonucleotides processively in the 3'- to 5'-direction. Also involved, along with RNase II, in tRNA processing. RNases II and R contribute to rRNA degradation during starvation, while RNase R and PNPase are the major contributors to quality control of rRNA during steady state growth. Contributes to degradation of some small RNAs (sRNA). This is Polyribonucleotide nucleotidyltransferase from Escherichia coli (strain K12).